The primary structure comprises 542 residues: 4-coumarate--CoA ligase-like 1 (542 aa).

Positions 189, 190, 191, 192, 193, and 197 each coordinate ATP. Tyr-237 is a (E)-4-coumaroyl-AMP binding site. Arg-258 is a CoA binding site. The SBD1 stretch occupies residues 260–331 (DLRIFLNALI…AKFPNVQVQE (72 aa)). (E)-4-coumaroyl-AMP is bound by residues Ala-309, Glu-331, Ala-332, and Thr-336. Glu-331, Ala-332, Thr-336, Asp-420, and Arg-435 together coordinate ATP. Positions 332-399 (AYGLTEHSCI…VRSQCVMQGY (68 aa)) are SBD2. Lys-437 and Lys-441 together coordinate (E)-4-coumaroyl-AMP. 2 residues coordinate CoA: Lys-443 and Gly-444. Lys-526 lines the ATP pocket.

The protein belongs to the ATP-dependent AMP-binding enzyme family. In terms of assembly, interacts with TKPR1, PKSA and PKSB. Requires Mg(2+) as cofactor. In terms of tissue distribution, mostly confined to anther tapetal cells.

The protein resides in the endoplasmic reticulum. It carries out the reaction (E)-4-coumarate + ATP + CoA = (E)-4-coumaroyl-CoA + AMP + diphosphate. The enzyme catalyses (E)-4-coumarate + ATP + H(+) = (E)-4-coumaroyl-AMP + diphosphate. The catalysed reaction is (E)-4-coumaroyl-AMP + CoA = (E)-4-coumaroyl-CoA + AMP + H(+). Its function is as follows. Carboxylate--CoA ligase that may use 4-coumarate as substrate. Follows a two-step reaction mechanism, wherein the carboxylate substrate first undergoes adenylation by ATP, followed by a thioesterification in the presence of CoA to yield the final CoA thioester. The chain is 4-coumarate--CoA ligase-like 1 from Arabidopsis thaliana (Mouse-ear cress).